The chain runs to 145 residues: Catabolic 3-dehydroquinase (145 aa).

Tyr24 functions as the Proton acceptor in the catalytic mechanism. Substrate-binding residues include Asn77, His83, and Asp90. His103 serves as the catalytic Proton donor. Residues 104–105 (IT) and Arg114 each bind substrate.

Belongs to the type-II 3-dehydroquinase family. Homododecamer. Adopts a ring-like structure, composed of an arrangement of two hexameric rings stacked on top of one another.

It catalyses the reaction 3-dehydroquinate = 3-dehydroshikimate + H2O. It functions in the pathway aromatic compound metabolism; 3,4-dihydroxybenzoate biosynthesis; 3,4-dihydroxybenzoate from 3-dehydroquinate: step 1/2. In terms of biological role, is involved in the catabolism of quinate. Allows the utilization of quinate as carbon source via the beta-ketoadipate pathway. The polypeptide is Catabolic 3-dehydroquinase (Clavispora lusitaniae (strain ATCC 42720) (Yeast)).